A 609-amino-acid polypeptide reads, in one-letter code: Chaperone protein DnaK (609 aa).

T173 carries the post-translational modification Phosphothreonine; by autocatalysis. Residues 525-542 (ENISDEDKKNAEEKKDAL) show a composition bias toward basic and acidic residues. Disordered stretches follow at residues 525-554 (ENIS…IDDI) and 574-609 (EQAQ…EDKK). Residues 574–587 (EQAQQAQQQGQEEQ) show a composition bias toward low complexity. The span at 597–609 (ADFKEVKDDEDKK) shows a compositional bias: basic and acidic residues.

This sequence belongs to the heat shock protein 70 family.

Functionally, acts as a chaperone. The chain is Chaperone protein DnaK from Staphylococcus epidermidis (strain ATCC 35984 / DSM 28319 / BCRC 17069 / CCUG 31568 / BM 3577 / RP62A).